Here is a 360-residue protein sequence, read N- to C-terminus: 3-isopropylmalate dehydrogenase (360 aa).

76–89 lines the NAD(+) pocket; sequence GPKWDKLDMAIRPE. Substrate is bound by residues R96, R106, R134, and D224. Positions 224, 248, and 252 each coordinate Mg(2+). Residue 282–294 coordinates NAD(+); the sequence is GSAPDIAGQNMAN.

The protein belongs to the isocitrate and isopropylmalate dehydrogenases family. LeuB type 1 subfamily. Homodimer. Requires Mg(2+) as cofactor. The cofactor is Mn(2+).

It is found in the cytoplasm. It carries out the reaction (2R,3S)-3-isopropylmalate + NAD(+) = 4-methyl-2-oxopentanoate + CO2 + NADH. Its pathway is amino-acid biosynthesis; L-leucine biosynthesis; L-leucine from 3-methyl-2-oxobutanoate: step 3/4. Functionally, catalyzes the oxidation of 3-carboxy-2-hydroxy-4-methylpentanoate (3-isopropylmalate) to 3-carboxy-4-methyl-2-oxopentanoate. The product decarboxylates to 4-methyl-2 oxopentanoate. This chain is 3-isopropylmalate dehydrogenase, found in Hahella chejuensis (strain KCTC 2396).